We begin with the raw amino-acid sequence, 908 residues long: Alanine--tRNA ligase (908 aa).

Zn(2+)-binding residues include His-596, His-600, Cys-698, and His-702.

This sequence belongs to the class-II aminoacyl-tRNA synthetase family. Requires Zn(2+) as cofactor.

It is found in the cytoplasm. It carries out the reaction tRNA(Ala) + L-alanine + ATP = L-alanyl-tRNA(Ala) + AMP + diphosphate. In terms of biological role, catalyzes the attachment of alanine to tRNA(Ala) in a two-step reaction: alanine is first activated by ATP to form Ala-AMP and then transferred to the acceptor end of tRNA(Ala). Also edits incorrectly charged Ser-tRNA(Ala) and Gly-tRNA(Ala) via its editing domain. The polypeptide is Alanine--tRNA ligase (Lysinibacillus sphaericus (strain C3-41)).